The chain runs to 504 residues: Ammonium transporter 1 member 4 (504 aa).

12 helical membrane-spanning segments follow: residues 12 to 32 (LIPLLSGGANATAAAAAAEYI), 55 to 75 (LLFSAYLVFAMQLGFAMLCAG), 90 to 110 (VIDAAAGGLFYYLFGFAFAFG), 136 to 156 (YFLYQWTFAIAAAGITSGSIA), 161 to 181 (FVAYLIYSSFLTGLVYPIVSH), 207 to 227 (FAGSGVVHMVGGIAGLWGALI), 251 to 271 (LVVLGTFLLWFGWYGFNPGSF), 292 to 314 (AVGRTAVTTTLAGCTAALTTLFG), 318 to 338 (IDGYWNVTDVCNGLLGGFAAI), 344 to 364 (VVEPWAALVCGFVAAWVLMGC), 377 to 397 (LEAAQLHGGCGAWGIIFTGLF), and 430 to 450 (VVQILVITGWVSVTMGTLFFI). Phosphothreonine is present on Thr471.

It belongs to the ammonia transporter channel (TC 1.A.11.2) family. Specifically expressed in pollen grains and tubes.

The protein resides in the cell membrane. In terms of biological role, high affinity ammonium transporter in the plasma membrane. This is Ammonium transporter 1 member 4 (AMT1-4) from Arabidopsis thaliana (Mouse-ear cress).